A 207-amino-acid chain; its full sequence is Uracil phosphoribosyltransferase (207 aa).

5-phospho-alpha-D-ribose 1-diphosphate contacts are provided by residues Arg-77, Arg-102, and 129 to 137 (DPMVATGGS). Uracil-binding positions include Ile-192 and 197–199 (GDA). A 5-phospho-alpha-D-ribose 1-diphosphate-binding site is contributed by Asp-198.

The protein belongs to the UPRTase family. Mg(2+) is required as a cofactor.

The enzyme catalyses UMP + diphosphate = 5-phospho-alpha-D-ribose 1-diphosphate + uracil. The protein operates within pyrimidine metabolism; UMP biosynthesis via salvage pathway; UMP from uracil: step 1/1. Allosterically activated by GTP. In terms of biological role, catalyzes the conversion of uracil and 5-phospho-alpha-D-ribose 1-diphosphate (PRPP) to UMP and diphosphate. This chain is Uracil phosphoribosyltransferase, found in Mycobacterium bovis (strain ATCC BAA-935 / AF2122/97).